A 253-amino-acid polypeptide reads, in one-letter code: A-type ATP synthase subunit B (253 aa).

It belongs to the ATPase alpha/beta chains family. As to quaternary structure, has multiple subunits with at least A(3), B(3), C, D, E, F, H, I and proteolipid K(x).

It localises to the cell membrane. Its function is as follows. Component of the A-type ATP synthase that produces ATP from ADP in the presence of a proton gradient across the membrane. The B chain is a regulatory subunit. This chain is A-type ATP synthase subunit B, found in Methanothermococcus thermolithotrophicus (Methanococcus thermolithotrophicus).